A 360-amino-acid polypeptide reads, in one-letter code: Holliday junction branch migration complex subunit RuvB (360 aa).

A large ATPase domain (RuvB-L) region spans residues 4–196 (HEEDLDQAEE…FGFTAHLEFY (193 aa)). Residues L35, R36, G77, K80, T81, T82, 143-145 (EDF), R186, Y196, and R233 contribute to the ATP site. T81 contacts Mg(2+). The interval 197-267 (EPDELDLIVQ…VAQDALDLYE (71 aa)) is small ATPAse domain (RuvB-S). A head domain (RuvB-H) region spans residues 270 to 360 (QLGLDRLDRG…PESDPPLFED (91 aa)). R306, R325, and R330 together coordinate DNA.

Belongs to the RuvB family. Homohexamer. Forms an RuvA(8)-RuvB(12)-Holliday junction (HJ) complex. HJ DNA is sandwiched between 2 RuvA tetramers; dsDNA enters through RuvA and exits via RuvB. An RuvB hexamer assembles on each DNA strand where it exits the tetramer. Each RuvB hexamer is contacted by two RuvA subunits (via domain III) on 2 adjacent RuvB subunits; this complex drives branch migration. In the full resolvosome a probable DNA-RuvA(4)-RuvB(12)-RuvC(2) complex forms which resolves the HJ.

The protein resides in the cytoplasm. The enzyme catalyses ATP + H2O = ADP + phosphate + H(+). The RuvA-RuvB-RuvC complex processes Holliday junction (HJ) DNA during genetic recombination and DNA repair, while the RuvA-RuvB complex plays an important role in the rescue of blocked DNA replication forks via replication fork reversal (RFR). RuvA specifically binds to HJ cruciform DNA, conferring on it an open structure. The RuvB hexamer acts as an ATP-dependent pump, pulling dsDNA into and through the RuvAB complex. RuvB forms 2 homohexamers on either side of HJ DNA bound by 1 or 2 RuvA tetramers; 4 subunits per hexamer contact DNA at a time. Coordinated motions by a converter formed by DNA-disengaged RuvB subunits stimulates ATP hydrolysis and nucleotide exchange. Immobilization of the converter enables RuvB to convert the ATP-contained energy into a lever motion, pulling 2 nucleotides of DNA out of the RuvA tetramer per ATP hydrolyzed, thus driving DNA branch migration. The RuvB motors rotate together with the DNA substrate, which together with the progressing nucleotide cycle form the mechanistic basis for DNA recombination by continuous HJ branch migration. Branch migration allows RuvC to scan DNA until it finds its consensus sequence, where it cleaves and resolves cruciform DNA. The protein is Holliday junction branch migration complex subunit RuvB of Nocardioides sp. (strain ATCC BAA-499 / JS614).